The sequence spans 37 residues: Trypsin inhibitor 3 (37 aa).

Cystine bridges form between cysteine 4/cysteine 21, cysteine 11/cysteine 25, and cysteine 20/cysteine 36.

Trypsin inhibitor. In Spinacia oleracea (Spinach), this protein is Trypsin inhibitor 3.